A 911-amino-acid chain; its full sequence is Androgen receptor (911 aa).

Positions 1–549 (MEVQLGLGRV…PIDYYFPPQK (549 aa)) are modulating. The tract at residues 1–578 (MEVQLGLGRV…GSCKVFFKRA (578 aa)) is interaction with ZNF318. Disordered regions lie at residues 35–164 (QNPG…LSLL) and 192–225 (QQQQQEAVSEGSSSGRAREASGAPTSSKDNYLGG). Residues 44–88 (AASAAPPGASLLLQQQQQQQQQQQQQQQQQQQQQQETSPRQQQQQ) show a composition bias toward low complexity. Ser81 is subject to Phosphoserine; by CDK9. Ser93 is subject to Phosphoserine. Over residues 192–214 (QQQQQEAVSEGSSSGRAREASGA) the composition is skewed to low complexity. Residues 215–225 (PTSSKDNYLGG) show a composition bias toward polar residues. Phosphotyrosine; by CSK is present on Tyr222. Phosphoserine is present on Ser255. A Phosphotyrosine; by CSK and TNK2 modification is found at Tyr266. Phosphotyrosine; by CSK is present on residues Tyr306, Tyr345, Tyr356, and Tyr361. Tyr362 bears the Phosphotyrosine; by CSK and TNK2 mark. Lys385 participates in a covalent cross-link: Glycyl lysine isopeptide (Lys-Gly) (interchain with G-Cter in SUMO). Residue Tyr392 is modified to Phosphotyrosine; by CSK. Lys512 is covalently cross-linked (Glycyl lysine isopeptide (Lys-Gly) (interchain with G-Cter in SUMO)). Phosphotyrosine; by CSK is present on residues Tyr526 and Tyr543. Residues 543–910 (YYFPPQKTCL…GKVKPIYFHT (368 aa)) are interaction with LPXN. NR C4-type zinc fingers lie at residues 551–571 (CLICGDEASGCHYGALTCGSC) and 587–611 (CASRNDCTIDKFRRKNCPSCRLRKC). A DNA-binding region (nuclear receptor) is located at residues 551 to 623 (CLICGDEASG…AGMTLGARKL (73 aa)). Residues 563–653 (YGALTCGSCK…TEETTQKLTV (91 aa)) form an interaction with HIPK3 region. The segment at 583–910 (QKYLCASRND…GKVKPIYFHT (328 aa)) is interaction with CCAR1. The segment at 616–910 (MTLGARKLKK…GKVKPIYFHT (295 aa)) is interaction with KAT7. Residue Ser642 is modified to Phosphoserine; by STK4/MST1. An NR LBD domain is found at 660-891 (ECQPIFLNVL…DFPEMMAEII (232 aa)). 17beta-hydroxy-5alpha-androstan-3-one is bound by residues Asn697 and Arg744. Residues Lys837 and Lys839 each participate in a glycyl lysine isopeptide (Lys-Gly) (interchain with G-Cter in ubiquitin) cross-link. Thr869 is a binding site for 17beta-hydroxy-5alpha-androstan-3-one. Residue Tyr907 is modified to Phosphotyrosine; by CSK.

Belongs to the nuclear hormone receptor family. NR3 subfamily. As to quaternary structure, binds DNA as a homodimer. Part of a ternary complex containing AR, EFCAB6/DJBP and PARK7. Interacts with HIPK3 and NR0B2 in the presence of androgen. The ligand binding domain interacts with KAT7/HBO1 in the presence of dihydrotestosterone. Interacts with EFCAB6/DJBP, PQBP1, RANBP9, RBAK, SPDEF, SRA1, TGFB1I1 and RREB1. Interacts with ZMIZ1/ZIMP10 and ZMIZ2/ZMIP7 which both enhance its transactivation activity. Interacts with SLC30A9 and RAD54L2/ARIP4. Interacts with MACROD1 (via macro domain). Interacts via the ligand-binding domain with LXXLL and FXXLF motifs from NCOA1, NCOA2, NCOA3 and MAGEA11. Interacts (via nuclear receptor DNA binding domain and nuclear receptor ligand binding domain) with NCOA4. The AR N-terminal poly-Gln region binds Ran resulting in enhancement of AR-mediated transactivation. Ran-binding decreases as the poly-Gln length increases. Interacts with HIP1 (via coiled coil domain). Interacts (via ligand-binding domain) with TRIM68. Interacts with TNK2. Interacts with USP26. Interacts with RNF6. Interacts (regulated by RNF6 probably through polyubiquitination) with RNF14; regulates AR transcriptional activity. Interacts with PRMT2 and TRIM24. Interacts with RACK1. Interacts with RANBP10; this interaction enhances dihydrotestosterone-induced AR transcriptional activity. Interacts with PRPF6 in a hormone-independent way; this interaction enhances dihydrotestosterone-induced AR transcriptional activity. Interacts with STK4/MST1. Interacts with ZIPK/DAPK3. Interacts with LPXN. Interacts with MAK. Part of a complex containing AR, MAK and NCOA3. Interacts with CRY1. Interacts with CCAR1 and GATA2. Interacts with ZNF318. Interacts with BUD31. Interacts with ARID4A. Interacts with ARID4B. Interacts (via NR LBD domain) with ZBTB7A; the interaction is direct and androgen-dependent. Interacts with NCOR1. Interacts with NCOR2. Interacts with CRY2 in a ligand-dependent manner. In terms of processing, phosphorylated in prostate cancer cells in response to several growth factors including EGF. Phosphorylation is induced by c-Src kinase (CSK). Tyr-526 is one of the major phosphorylation sites and an increase in phosphorylation and Src kinase activity is associated with prostate cancer progression. Phosphorylation by TNK2 enhances the DNA-binding and transcriptional activity. Phosphorylation at Ser-81 by CDK9 regulates AR promoter selectivity and cell growth. Sumoylated on Lys-385 (major) and Lys-512. Ubiquitinated. Deubiquitinated by USP26. 'Lys-6' and 'Lys-27'-linked polyubiquitination by RNF6 modulates AR transcriptional activity and specificity. Post-translationally, palmitoylated by ZDHHC7 and ZDHHC21. Palmitoylation is required for plasma membrane targeting and for rapid intracellular signaling via ERK and AKT kinases and cAMP generation.

It localises to the nucleus. It is found in the cytoplasm. In terms of biological role, steroid hormone receptors are ligand-activated transcription factors that regulate eukaryotic gene expression and affect cellular proliferation and differentiation in target tissues. Transcription factor activity is modulated by bound coactivator and corepressor proteins like ZBTB7A that recruits NCOR1 and NCOR2 to the androgen response elements/ARE on target genes, negatively regulating androgen receptor signaling and androgen-induced cell proliferation. Transcription activation is also down-regulated by NR0B2. Activated, but not phosphorylated, by HIPK3 and ZIPK/DAPK3. The protein is Androgen receptor (AR) of Pan troglodytes (Chimpanzee).